The primary structure comprises 205 residues: MPLTEIIAGAALGLALQILHEAIQRAKDRSLTTSCILDRLDSTILRITPLMAKVEKLNKESDESLRKVFEDLKHLLEKAVVLVEAYAELKRRNLLGKYRYKRRIKELEGSLKWMVDVDVKVNQWADIKDLMAKMSEMNTKLEKIMGQPIDCIISEDNTNMDIVERVDPSLEAKAGCSNSDSKPKIDIHLRWSKQSKDHGIRFVLN.

Positions Met-1–Ile-153 constitute an RPW8 domain. A helical transmembrane segment spans residues Ile-7 to Ile-23. Coiled-coil stretches lie at residues Glu-70–Arg-92 and Ala-125–Gln-147.

The protein belongs to the plant RPW8 protein family.

It is found in the membrane. Functionally, probable disease resistance (R) protein. The polypeptide is RPW8-like protein 2 (Arabidopsis thaliana (Mouse-ear cress)).